A 196-amino-acid polypeptide reads, in one-letter code: Peptide deformylase (196 aa).

Fe cation contacts are provided by Cys-105 and His-147. Glu-148 is a catalytic residue. His-151 is a binding site for Fe cation.

This sequence belongs to the polypeptide deformylase family. The cofactor is Fe(2+).

The catalysed reaction is N-terminal N-formyl-L-methionyl-[peptide] + H2O = N-terminal L-methionyl-[peptide] + formate. Functionally, removes the formyl group from the N-terminal Met of newly synthesized proteins. Requires at least a dipeptide for an efficient rate of reaction. N-terminal L-methionine is a prerequisite for activity but the enzyme has broad specificity at other positions. This is Peptide deformylase from Flavobacterium johnsoniae (strain ATCC 17061 / DSM 2064 / JCM 8514 / BCRC 14874 / CCUG 350202 / NBRC 14942 / NCIMB 11054 / UW101) (Cytophaga johnsonae).